Consider the following 274-residue polypeptide: Diaminopimelate epimerase (274 aa).

3 residues coordinate substrate: Asn11, Gln44, and Asn64. The active-site Proton donor is the Cys73. Substrate-binding positions include 74–75 (GN), Asn157, Asn190, and 208–209 (ER). The active-site Proton acceptor is the Cys217. 218-219 (GS) is a substrate binding site.

This sequence belongs to the diaminopimelate epimerase family. Homodimer.

It localises to the cytoplasm. It carries out the reaction (2S,6S)-2,6-diaminopimelate = meso-2,6-diaminopimelate. Its pathway is amino-acid biosynthesis; L-lysine biosynthesis via DAP pathway; DL-2,6-diaminopimelate from LL-2,6-diaminopimelate: step 1/1. Functionally, catalyzes the stereoinversion of LL-2,6-diaminopimelate (L,L-DAP) to meso-diaminopimelate (meso-DAP), a precursor of L-lysine and an essential component of the bacterial peptidoglycan. This Escherichia fergusonii (strain ATCC 35469 / DSM 13698 / CCUG 18766 / IAM 14443 / JCM 21226 / LMG 7866 / NBRC 102419 / NCTC 12128 / CDC 0568-73) protein is Diaminopimelate epimerase.